The chain runs to 330 residues: Replication factor C small subunit (330 aa).

48-55 (GPPGTGKT) lines the ATP pocket.

Belongs to the activator 1 small subunits family. RfcS subfamily. As to quaternary structure, heteropentamer composed of four small subunits (RfcS) and one large subunit (RfcL). A homotetramer of this subunit interacts with PCNA heterodimer PCNA1-PCNA2.

Part of the RFC clamp loader complex which loads the PCNA sliding clamp onto DNA. The complex possesses DNA-dependent ATPase activity. In Saccharolobus solfataricus (strain ATCC 35092 / DSM 1617 / JCM 11322 / P2) (Sulfolobus solfataricus), this protein is Replication factor C small subunit (rfcS).